Reading from the N-terminus, the 337-residue chain is Casein kinase I isoform alpha (337 aa).

The region spanning 17–285 is the Protein kinase domain; that stretch reads YKLVRKIGSG…YLRQLFRILF (269 aa). Residues 23–31 and K46 contribute to the ATP site; that span reads IGSGSFGDI. D136 serves as the catalytic Proton acceptor. Residues 309 to 325 show a composition bias toward low complexity; that stretch reads AASSSGQGQQAQTPTGK. The disordered stretch occupies residues 309-337; it reads AASSSGQGQQAQTPTGKQTDKSKSNMKGF.

This sequence belongs to the protein kinase superfamily. CK1 Ser/Thr protein kinase family. Casein kinase I subfamily. Post-translationally, autophosphorylated.

It localises to the cytoplasm. Its subcellular location is the cytoskeleton. The protein resides in the microtubule organizing center. It is found in the centrosome. The protein localises to the chromosome. It localises to the centromere. Its subcellular location is the kinetochore. The protein resides in the nucleus speckle. It is found in the cilium basal body. The protein localises to the spindle. It carries out the reaction L-seryl-[protein] + ATP = O-phospho-L-seryl-[protein] + ADP + H(+). The enzyme catalyses L-threonyl-[protein] + ATP = O-phospho-L-threonyl-[protein] + ADP + H(+). Casein kinases are operationally defined by their preferential utilization of acidic proteins such as caseins as substrates. It can phosphorylate a large number of proteins. Participates in Wnt signaling. May play a role in segregating chromosomes during mitosis. May play a role in keratin cytoskeleton disassembly. This Gallus gallus (Chicken) protein is Casein kinase I isoform alpha (CSNK1A1).